A 1476-amino-acid chain; its full sequence is Cystic fibrosis transmembrane conductance regulator (1476 aa).

Over 1–77 (MQKSPLEKAS…QLIHALRRCF (77 aa)) the chain is Cytoplasmic. The chain crosses the membrane as a helical span at residues 78 to 98 (FWRFLFYGILLYLGEVTKAVQ). Residues 81–365 (FLFYGILLYL…TAVQIWYDSF (285 aa)) enclose the ABC transmembrane type-1 1 domain. The Extracellular portion of the chain corresponds to 99-122 (PVLLGRIIASYDPENKVERSIAIY). Residues 123-146 (LGIGLCLLFIVRTLLLHPAIFGLH) form a helical membrane-spanning segment. Topologically, residues 147 to 195 (RIGMQMRTAMFSLIYKKTLKLSSRVLDKISIGQLVSLLSNNLNKFDEGL) are cytoplasmic. The helical transmembrane segment at 196-216 (ALAHFIWIAPLQVTLLMGLLW) threads the bilayer. Residues 217–222 (DLLQFS) lie on the Extracellular side of the membrane. The helical transmembrane segment at 223–243 (AFCGLGLLIILVIFQAILGKM) threads the bilayer. The Cytoplasmic segment spans residues 244–298 (MVKYRDQRAAKINERLVITSEIIDNIYSVKAYCWESAMEKMIENLREVELKMTRK). A helical membrane pass occupies residues 299–319 (AAYMRFFTSSAFFFSGFFVVF). Residues 320–339 (LSVLPYTVINGIVLRKIFTT) are Extracellular-facing. Residues 340–358 (ISFCIVLRMSVTRQFPTAV) traverse the membrane as a helical segment. Residues 359-853 (QIWYDSFGMI…YLRYFTLHKG (495 aa)) lie on the Cytoplasmic side of the membrane. ATP-binding positions include Trp-401, 458–465 (GSTGSGKT), and Gln-493. Positions 423-646 (SDENNVSFSH…RPDFSSKLMG (224 aa)) constitute an ABC transporter 1 domain. The S-palmitoyl cysteine moiety is linked to residue Cys-524. Residues Ser-549 and Ser-660 each carry the phosphoserine modification. Positions 654–826 (TEERRSSILT…EEINEEDLKE (173 aa)) are disordered R region. Ser-670 is subject to Phosphoserine; by PKA. Phosphoserine is present on residues Ser-684, Ser-698, and Ser-710. Position 715 is a phosphothreonine (Thr-715). Phosphoserine is present on residues Ser-732, Ser-763, Ser-785, Ser-790, and Ser-808. A helical transmembrane segment spans residues 854–874 (LLLVLIWCVLVFLVEVAASLF). Residues 854–1153 (LLLVLIWCVL…SSIDTDSLMR (300 aa)) form the ABC transmembrane type-1 2 domain. The Extracellular segment spans residues 875 to 913 (VLWLLKNNPVNSGNNGTKISNSSYVVIITSTSFYYIFYI). Residues Asn-889 and Asn-895 are each glycosylated (N-linked (GlcNAc...) asparagine). Residues 914–934 (YVGVADTLLALSLFRGLPLVH) traverse the membrane as a discontinuously helical segment. Residues 935–985 (TLITASKILHRKMLHSILHAPMSTISKLKAGGILNRFSKDIAILDDFLPLT) are Cytoplasmic-facing. Residues 986-1006 (IFDFIQLVFIVIGAIIVVSAL) traverse the membrane as a helical segment. Topologically, residues 1007–1008 (QP) are extracellular. A helical membrane pass occupies residues 1009-1029 (YIFLATVPGLVVFILLRAYFL). Residues 1030 to 1090 (HTAQQLKQLE…TANWFMYLAT (61 aa)) lie on the Cytoplasmic side of the membrane. The chain crosses the membrane as a helical span at residues 1091-1111 (LRWFQMRIDMIFVLFFIVVTF). Topologically, residues 1112 to 1125 (ISILTTGEGEGTAG) are extracellular. The chain crosses the membrane as a helical span at residues 1126–1146 (IILTLAMNIMSTLQWAVNSSI). Residues 1147–1476 (DTDSLMRSVS…TEEEVQETRL (330 aa)) are Cytoplasmic-facing. The ABC transporter 2 domain maps to 1208-1439 (VKDLTVKYMD…KSIFQQAISS (232 aa)). ATP-binding positions include Tyr-1215 and 1240–1247 (GRTGSGKS). Residues 1382–1476 (RVLKQAFAGC…TEEEVQETRL (95 aa)) are interaction with GORASP2. Cys-1391 carries S-palmitoyl cysteine lipidation. Residues Ser-1440 and Ser-1452 each carry the phosphoserine modification. The disordered stretch occupies residues 1446-1476 (FQGRHSSKHKPRTQITALKEETEEEVQETRL). The span at 1466–1476 (ETEEEVQETRL) shows a compositional bias: acidic residues. Positions 1474–1476 (TRL) match the PDZ-binding motif.

This sequence belongs to the ABC transporter superfamily. ABCC family. CFTR transporter (TC 3.A.1.202) subfamily. As to quaternary structure, monomer; does not require oligomerization for channel activity. May form oligomers in the membrane. Interacts with SLC26A3, SLC26A6 and NHERF1. Interacts with SHANK2. Interacts with MYO6. Interacts (via C-terminus) with GOPC (via PDZ domain); this promotes CFTR internalization and thereby decreases channel activity. Interacts with SLC4A7 through NHERF1. Found in a complex with MYO5B and RAB11A. Interacts with ANO1. Interacts with SLC26A8. Interacts with AHCYL1; the interaction increases CFTR activity. Interacts with CSE1L. The core-glycosylated form interacts with GORASP2 (via PDZ GRASP-type 1 domain) in respone to ER stress. Interacts with MARCHF2; the interaction leads to CFTR ubiqtuitination and degradation. Interacts with ADGRG2. N-glycosylated. Post-translationally, phosphorylated; cAMP treatment promotes phosphorylation and activates the channel. Dephosphorylation decreases the ATPase activity (in vitro). Phosphorylation at PKA sites activates the channel. Phosphorylation at PKC sites enhances the response to phosphorylation by PKA. Phosphorylated by AMPK; this inhibits channel activity. In terms of processing, ubiquitinated, leading to its degradation in the lysosome. Deubiquitination by USP10 in early endosomes enhances its endocytic recycling to the cell membrane. Ubiquitinated by RNF185 during ER stress. Ubiquitinated by MARCHF2. Expressed in the epididymis (at protein level). In the initial segment of the epididymis, detected on both the luminal and basolateral sides of the ducts where it is expressed in the duct columnar cells as well as in the interstitial smooth muscle cells. Expressed in sperm in the caput. In the cauda, detected along the luminal border but not continuously and is also expressed on the basolateral surface. Within the caudal lumen, detected on sperm. Isoform 1: Expressed in a variety of epithelial tissues including colon, kidney, lung, small intestine, pancreatic duct and testis. Isoform 2: Expressed only in testis. Isoform 3: Expressed only in testis.

The protein resides in the apical cell membrane. Its subcellular location is the early endosome membrane. The protein localises to the cell membrane. It localises to the recycling endosome membrane. It is found in the endoplasmic reticulum membrane. The protein resides in the nucleus. The enzyme catalyses ATP + H2O + closed Cl(-) channel = ADP + phosphate + open Cl(-) channel.. It carries out the reaction chloride(in) = chloride(out). It catalyses the reaction hydrogencarbonate(in) = hydrogencarbonate(out). The catalysed reaction is ATP + H2O = ADP + phosphate + H(+). Epithelial ion channel that plays an important role in the regulation of epithelial ion and water transport and fluid homeostasis. Mediates the transport of chloride ions across the cell membrane. Possesses an intrinsic ATPase activity and utilizes ATP to gate its channel; the passive flow of anions through the channel is gated by cycles of ATP binding and hydrolysis by the ATP-binding domains. The ion channel is also permeable to HCO(3)(-); selectivity depends on the extracellular chloride concentration. Exerts its function also by modulating the activity of other ion channels and transporters. Contributes to the regulation of the pH and the ion content of the epithelial fluid layer. Modulates the activity of the epithelial sodium channel (ENaC) complex, in part by regulating the cell surface expression of the ENaC complex. May regulate bicarbonate secretion and salvage in epithelial cells by regulating the transporter SLC4A7. Can inhibit the chloride channel activity of ANO1. Plays a role in the chloride and bicarbonate homeostasis during sperm epididymal maturation and capacitation. The protein is Cystic fibrosis transmembrane conductance regulator of Mus musculus (Mouse).